The primary structure comprises 633 residues: Chaperone protein dnaK2 (633 aa).

At Thr196 the chain carries Phosphothreonine; by autocatalysis. The interval 600 to 633 (ATADGGPAQHAATGGPTSGGGGGDDVIDAEFDKG) is disordered. Residues 624–633 (DVIDAEFDKG) are compositionally biased toward acidic residues.

Belongs to the heat shock protein 70 family.

Acts as a chaperone. The chain is Chaperone protein dnaK2 (dnaK2) from Streptomyces avermitilis (strain ATCC 31267 / DSM 46492 / JCM 5070 / NBRC 14893 / NCIMB 12804 / NRRL 8165 / MA-4680).